Consider the following 554-residue polypeptide: Calcium/calmodulin-dependent protein kinase type II delta 2 chain (554 aa).

In terms of domain architecture, Protein kinase spans 13–271; that stretch reads YQLFEELGKG…AAEAPKHPWI (259 aa). Residues 19 to 27 and lysine 42 contribute to the ATP site; that span reads LGKGAFSVV. The active-site Proton acceptor is the aspartate 135. Threonine 286 carries the post-translational modification Phosphothreonine. Phosphoserine is present on residues serine 314 and serine 318. Disordered regions lie at residues 324 to 375 and 392 to 413; these read PDGV…TIED and WQPS…SSVQ. A compositionally biased stretch (polar residues) spans 330–340; that stretch reads NNKTNLASSPK. The residue at position 372 (threonine 372) is a Phosphothreonine.

The protein belongs to the protein kinase superfamily. CAMK Ser/Thr protein kinase family. CaMK subfamily. In terms of assembly, CAMK2 is composed of four different chains: alpha, beta, gamma, and delta. The different isoforms assemble into homo- or heteromultimeric holoenzymes composed of 8 to 12 subunits. As to expression, first detected at 18 hpf. At 24 hpf, expressed in discrete anterior locations and along either side of the midline. At 48 hpf, expression is predominantly in the forebrain, and then accumulates in the forebrain, hindbrain, and retinal epithelium at 72 hpf.

The enzyme catalyses L-seryl-[protein] + ATP = O-phospho-L-seryl-[protein] + ADP + H(+). It carries out the reaction L-threonyl-[protein] + ATP = O-phospho-L-threonyl-[protein] + ADP + H(+). Its activity is regulated as follows. Autophosphorylation of CAMK2 plays an important role in the regulation of the kinase activity. CaM-kinase II (CAMK2) is a prominent kinase in the central nervous system. In Danio rerio (Zebrafish), this protein is Calcium/calmodulin-dependent protein kinase type II delta 2 chain (camk2d2).